The sequence spans 614 residues: UvrABC system protein C (614 aa).

The 78-residue stretch at 14-91 folds into the GIY-YIG domain; it reads TSPGCYIHKD…IKENKPKYNI (78 aa). Residues 196–231 form the UVR domain; the sequence is DKIIDDLKSKMAVAAQSMEFERAAEYRDLIQAIGTL. The segment at 595-614 is disordered; it reads LPQVAEERVDYQTEGNHNEP. Positions 599–614 are enriched in basic and acidic residues; it reads AEERVDYQTEGNHNEP.

It belongs to the UvrC family. Interacts with UvrB in an incision complex.

The protein resides in the cytoplasm. Functionally, the UvrABC repair system catalyzes the recognition and processing of DNA lesions. UvrC both incises the 5' and 3' sides of the lesion. The N-terminal half is responsible for the 3' incision and the C-terminal half is responsible for the 5' incision. The protein is UvrABC system protein C of Streptococcus pneumoniae serotype 4 (strain ATCC BAA-334 / TIGR4).